The primary structure comprises 553 residues: Interleukin-20 receptor subunit alpha (553 aa).

The first 29 residues, methionine 1–alanine 29, serve as a signal peptide directing secretion. Residues valine 30 to lysine 250 are Extracellular-facing. 2 Fibronectin type-III domains span residues leucine 37 to threonine 135 and glutamine 136 to aspartate 242. N-linked (GlcNAc...) asparagine glycans are attached at residues asparagine 42, asparagine 83, asparagine 91, asparagine 182, asparagine 191, and asparagine 200. Residues cysteine 87 and cysteine 95 are joined by a disulfide bond. A disulfide bond links cysteine 215 and cysteine 236. A helical transmembrane segment spans residues isoleucine 251 to tyrosine 271. Residues serine 272–asparagine 553 lie on the Cytoplasmic side of the membrane. Disordered regions lie at residues serine 333–glutamate 353 and glutamine 462–glutamate 515. Polar residues predominate over residues serine 334–glycine 346. Residues glutamine 499–glycine 513 are compositionally biased toward acidic residues.

Belongs to the type II cytokine receptor family. Heterodimer with IL20RB and heterodimer with IL10RB. In terms of tissue distribution, widely expressed with highest levels in skin and testis and high levels in brain. Highly expressed in psoriatic skin.

The protein localises to the membrane. Functionally, the IL20RA/IL20RB dimer is a receptor for IL19, IL20 and IL24. The IL20RA/IL10RB dimer is a receptor for IL26. This Homo sapiens (Human) protein is Interleukin-20 receptor subunit alpha (IL20RA).